The chain runs to 1280 residues: SET and MYND domain-containing protein DDB_G0284059 (1280 aa).

Disordered stretches follow at residues 1–35 (MTKK…SHNH) and 111–167 (INKI…QKQQ). Composition is skewed to low complexity over residues 16–25 (NNNNNNNHGN) and 117–153 (ENSP…QSQP). TPR repeat units lie at residues 272-305 (SKGY…YDME) and 383-416 (HKLY…IEKR). Residues 439 to 468 (QKDEEIEQELDNKNNNSNDDEKQQQQQQQQ) adopt a coiled-coil conformation. The Zn(2+) site is built by Cys533, Cys536, Cys546, Cys549, Cys555, Cys559, His568, and Cys572. Residues 533 to 572 (CYNCFKEILSPIYCKECSNSQYCSNKCLNEDYVKQHGREC) form an MYND-type zinc finger. Disordered regions lie at residues 601 to 642 (ANKG…QNLN), 659 to 726 (ALSS…TTTT), 854 to 905 (QQQQ…PFSP), and 1039 to 1079 (AKLQ…LNNN). 5 stretches are compositionally biased toward low complexity: residues 659–697 (ALSS…SLTE), 712–726 (SSSS…TTTT), 854–898 (QQQQ…QNPP), 1042–1053 (QQQQQQQQQHQQ), and 1061–1079 (NSNP…LNNN). The region spanning 822–965 (CQLTTYTFAI…KGEEILGCYG (144 aa)) is the SET domain. The TPR 3 repeat unit spans residues 1218–1251 (GREYSKLGQIYLTLGEIEKSEDAIEKAESILMSW).

It belongs to the class V-like SAM-binding methyltransferase superfamily.

In terms of biological role, probable methyltransferase. The polypeptide is SET and MYND domain-containing protein DDB_G0284059 (Dictyostelium discoideum (Social amoeba)).